A 232-amino-acid chain; its full sequence is NAD(P)H-quinone oxidoreductase subunit K 1 (232 aa).

Residues Cys-49, Cys-50, Cys-114, and Cys-145 each contribute to the [4Fe-4S] cluster site.

This sequence belongs to the complex I 20 kDa subunit family. In terms of assembly, NDH-1 can be composed of about 15 different subunits; different subcomplexes with different compositions have been identified which probably have different functions. It depends on [4Fe-4S] cluster as a cofactor.

It localises to the cell inner membrane. The enzyme catalyses a plastoquinone + NADH + (n+1) H(+)(in) = a plastoquinol + NAD(+) + n H(+)(out). The catalysed reaction is a plastoquinone + NADPH + (n+1) H(+)(in) = a plastoquinol + NADP(+) + n H(+)(out). Its function is as follows. NDH-1 shuttles electrons from an unknown electron donor, via FMN and iron-sulfur (Fe-S) centers, to quinones in the respiratory and/or the photosynthetic chain. The immediate electron acceptor for the enzyme in this species is believed to be plastoquinone. Couples the redox reaction to proton translocation, and thus conserves the redox energy in a proton gradient. Cyanobacterial NDH-1 also plays a role in inorganic carbon-concentration. The chain is NAD(P)H-quinone oxidoreductase subunit K 1 from Gloeobacter violaceus (strain ATCC 29082 / PCC 7421).